Reading from the N-terminus, the 418-residue chain is Actin-related protein 3 (418 aa).

It belongs to the actin family. ARP3 subfamily. As to quaternary structure, component of the Arp2/3 complex composed of actr2/arp2, actr3/arp3, arpc1b, arpc2, arpc3, arpc4 and arpc5.

Its subcellular location is the cytoplasm. The protein localises to the cytoskeleton. The protein resides in the cell projection. It is found in the nucleus. Its function is as follows. ATP-binding component of the Arp2/3 complex, a multiprotein complex that mediates actin polymerization upon stimulation by nucleation-promoting factor (NPF). The Arp2/3 complex mediates the formation of branched actin networks in the cytoplasm, providing the force for cell motility. Seems to contact the pointed end of the daughter actin filament. In addition to its role in the cytoplasmic cytoskeleton, the Arp2/3 complex also promotes actin polymerization in the nucleus, thereby regulating gene transcription and repair of damaged DNA. The Arp2/3 complex promotes homologous recombination (HR) repair in response to DNA damage by promoting nuclear actin polymerization, leading to drive motility of double-strand breaks (DSBs). This chain is Actin-related protein 3 (actr3), found in Takifugu rubripes (Japanese pufferfish).